The sequence spans 125 residues: Mitochondrial import inner membrane translocase subunit tim16-A (125 aa).

Positions 58-110 (EAQQILNVSKLTPEEIQKNYEHLFKVNDKGLGGSFYLQSKVVRAKERLDQEME) are J-like.

The protein belongs to the TIM16/PAM16 family. In terms of assembly, probable component of the PAM complex at least composed of 1 mitochondrial HSP70 protein, 1 GRPE, 1 TIMM44, 1 TIMM16/PAM16 and 1 TIMM14. Associates with the TIM23 complex.

It is found in the mitochondrion inner membrane. Its function is as follows. Regulates ATP-dependent protein translocation into the mitochondrial matrix. This Xenopus laevis (African clawed frog) protein is Mitochondrial import inner membrane translocase subunit tim16-A (pam16-a).